We begin with the raw amino-acid sequence, 82 residues long: RNA-binding protein KhpA (82 aa).

The 48-residue stretch at 35 to 82 (STILELRVSQSDVGKIIGRRGRIARAIRTLLGACAAKTNRRVQLEILD) folds into the KH domain.

Belongs to the KhpA RNA-binding protein family. As to quaternary structure, forms a complex with KhpB.

Its subcellular location is the cytoplasm. A probable RNA chaperone. Forms a complex with KhpB which binds to cellular RNA and controls its expression. Plays a role in peptidoglycan (PG) homeostasis and cell length regulation. The chain is RNA-binding protein KhpA from Borreliella burgdorferi (strain ATCC 35210 / DSM 4680 / CIP 102532 / B31) (Borrelia burgdorferi).